A 545-amino-acid chain; its full sequence is MTPGELRRLYLIIRVFLSYGLDELIPRIRLTWPLRFGRYLLFWIPNRHKDKSLGERLRLALQELGPVWIKFGQMLSTRRDLFPPAIADQLALLQDRVASFDGALARQYIETALGGALETWFDDFEPIALASASIAQVHTARLKENGQEIVIKVIRPDILPIIKADIRLMYRLANWVPMLLPDGRRLRPREVVREYEKTLIDELNLLREAANAIQLRRNFENSSTLYVPEIYSDYCRENVLVMERVYGIPVSDIEALEAQNTNMRLLAERGVQVFFTQVFRDSFFHADMHPGNIFVSYEHPEDPFYIGIDYGIVGSLNKDDKRYLAENFIAFFNRDYRKVAELHVDSGWVPSDTNVEDFEFAIRTVCEPIFEKPLAEISFGHVLLNLFNTARRFNMAVQPQLVLLQKTLLYVEGLGRQLYPQLDLWKTAKPFLEEWLHSQVGLPAVIRALKEKVPYWAEKLPELPELVYDSLQQHKHLQVSIEKLSGHLRGQQIKQRQSQYLLGVGATLFLCGSLFLLSGLANIPWLFIGAGTVSWLFGWCRLCKI.

The Protein kinase domain occupies 123 to 501; it reads DFEPIALASA…QIKQRQSQYL (379 aa). ATP is bound by residues 129–137 and K152; that span reads LASASIAQV. Residue D287 is the Proton acceptor of the active site. Residues 508–528 form a helical membrane-spanning segment; it reads LFLCGSLFLLSGLANIPWLFI.

It belongs to the ABC1 family. UbiB subfamily.

The protein localises to the cell inner membrane. It participates in cofactor biosynthesis; ubiquinone biosynthesis [regulation]. Functionally, is probably a protein kinase regulator of UbiI activity which is involved in aerobic coenzyme Q (ubiquinone) biosynthesis. The chain is Probable protein kinase UbiB from Photorhabdus laumondii subsp. laumondii (strain DSM 15139 / CIP 105565 / TT01) (Photorhabdus luminescens subsp. laumondii).